The chain runs to 261 residues: Acidic leucine-rich nuclear phosphoprotein 32 family member A (261 aa).

LRR repeat units follow at residues 16 to 37 (QITE…TDEY), 39 to 60 (ALES…PKLP), 61 to 83 (NLKK…TTSP), and 84 to 105 (KLQY…KPLE). The region spanning 118–156 (NDATQVDNYREKIFKMLPSLNFLDGFDCNDEEVQSDGDD) is the LRRCT domain. 2 stretches are compositionally biased toward acidic residues: residues 145 to 185 (CNDE…EEAN) and 194 to 229 (YNDD…DGDA). The tract at residues 145 to 261 (CNDEEVQSDG…VRGKKRKHDG (117 aa)) is disordered. A compositionally biased stretch (basic and acidic residues) spans 238–252 (AKDKDGEKEADESQV).

The protein belongs to the ANP32 family. In terms of processing, phosphorylated on serine residues.

The protein localises to the nucleus. The protein resides in the cytoplasm. Implicated in a number of cellular processes, including proliferation, differentiation, caspase-dependent and caspase-independent apoptosis, suppression of transformation (tumor suppressor), inhibition of protein phosphatase 2A, regulation of mRNA trafficking and stability, and inhibition of acetyltransferases as part of the INHAT (inhibitor of histone acetyltransferases) complex. The polypeptide is Acidic leucine-rich nuclear phosphoprotein 32 family member A (Anp32a) (Drosophila melanogaster (Fruit fly)).